Consider the following 390-residue polypeptide: Putative F-box protein At3g52320 (390 aa).

The F-box domain maps to 21–71 (VVFLPEIPEEMLIDILIRLPAKSLMRFKCVSKLWLSLITSRYFTNRFFKPS).

This chain is Putative F-box protein At3g52320, found in Arabidopsis thaliana (Mouse-ear cress).